A 316-amino-acid chain; its full sequence is Fe-S cluster assembly protein DRE2 (316 aa).

Residues 7–139 (VSPPKRTLLL…PDYGDNEGAV (133 aa)) form an N-terminal SAM-like domain region. The tract at residues 140–208 (TLKFGLKKKN…EDTLMTEEDL (69 aa)) is linker. [2Fe-2S] cluster-binding residues include cysteine 218, cysteine 229, cysteine 232, and cysteine 234. Residues 218 to 234 (CQPKAGKRRRACKDCSC) form a fe-S binding site A region. [4Fe-4S] cluster is bound by residues cysteine 279, cysteine 282, cysteine 290, and cysteine 293. 2 consecutive short sequence motifs (cx2C motif) follow at residues 279–282 (CGNC) and 290–293 (CDGC). The interval 279-293 (CGNCSLGDAFRCDGC) is fe-S binding site B.

Belongs to the anamorsin family. As to quaternary structure, monomer. Interacts with TAH18. Interacts with MIA40. Requires [2Fe-2S] cluster as cofactor. [4Fe-4S] cluster is required as a cofactor.

The protein localises to the cytoplasm. It localises to the mitochondrion intermembrane space. Component of the cytosolic iron-sulfur (Fe-S) protein assembly (CIA) machinery required for the maturation of extramitochondrial Fe-S proteins. Part of an electron transfer chain functioning in an early step of cytosolic Fe-S biogenesis, facilitating the de novo assembly of a [4Fe-4S] cluster on the scaffold complex CFD1-NBP35. Electrons are transferred to DRE2 from NADPH via the FAD- and FMN-containing protein TAH18. TAH18-DRE2 are also required for the assembly of the diferric tyrosyl radical cofactor of ribonucleotide reductase (RNR), probably by providing electrons for reduction during radical cofactor maturation in the catalytic small subunit RNR2. The chain is Fe-S cluster assembly protein DRE2 from Fusarium vanettenii (strain ATCC MYA-4622 / CBS 123669 / FGSC 9596 / NRRL 45880 / 77-13-4) (Fusarium solani subsp. pisi).